The sequence spans 203 residues: Holliday junction branch migration complex subunit RuvA (203 aa).

Residues 1–63 (MIGKLSGKVD…EEHMHLYGFL (63 aa)) are domain I. The tract at residues 64 to 142 (TLEEKIFFNL…KISSGSAIIK (79 aa)) is domain II. The tract at residues 143 to 149 (ESLNIKN) is flexible linker. Positions 150–203 (ITPVASNEVIKALVNLGFSRFEAQNAVQGIITQNPEISIDELIKTALKNRNSNF) are domain III.

This sequence belongs to the RuvA family. As to quaternary structure, homotetramer. Forms an RuvA(8)-RuvB(12)-Holliday junction (HJ) complex. HJ DNA is sandwiched between 2 RuvA tetramers; dsDNA enters through RuvA and exits via RuvB. An RuvB hexamer assembles on each DNA strand where it exits the tetramer. Each RuvB hexamer is contacted by two RuvA subunits (via domain III) on 2 adjacent RuvB subunits; this complex drives branch migration. In the full resolvosome a probable DNA-RuvA(4)-RuvB(12)-RuvC(2) complex forms which resolves the HJ.

The protein resides in the cytoplasm. Its function is as follows. The RuvA-RuvB-RuvC complex processes Holliday junction (HJ) DNA during genetic recombination and DNA repair, while the RuvA-RuvB complex plays an important role in the rescue of blocked DNA replication forks via replication fork reversal (RFR). RuvA specifically binds to HJ cruciform DNA, conferring on it an open structure. The RuvB hexamer acts as an ATP-dependent pump, pulling dsDNA into and through the RuvAB complex. HJ branch migration allows RuvC to scan DNA until it finds its consensus sequence, where it cleaves and resolves the cruciform DNA. The chain is Holliday junction branch migration complex subunit RuvA from Rickettsia peacockii (strain Rustic).